The sequence spans 107 residues: Large ribosomal subunit protein uL23 (107 aa).

Belongs to the universal ribosomal protein uL23 family. As to quaternary structure, part of the 50S ribosomal subunit. Contacts protein L29, and trigger factor when it is bound to the ribosome.

Functionally, one of the early assembly proteins it binds 23S rRNA. One of the proteins that surrounds the polypeptide exit tunnel on the outside of the ribosome. Forms the main docking site for trigger factor binding to the ribosome. The protein is Large ribosomal subunit protein uL23 of Gluconobacter oxydans (strain 621H) (Gluconobacter suboxydans).